Consider the following 151-residue polypeptide: Large ribosomal subunit protein bL9 (151 aa).

Belongs to the bacterial ribosomal protein bL9 family.

Binds to the 23S rRNA. This Desulforapulum autotrophicum (strain ATCC 43914 / DSM 3382 / VKM B-1955 / HRM2) (Desulfobacterium autotrophicum) protein is Large ribosomal subunit protein bL9.